A 90-amino-acid polypeptide reads, in one-letter code: N(2)-fixation sustaining protein CowN (90 aa).

This sequence belongs to the CowN family.

Functionally, is required to sustain N(2)-dependent growth in the presence of low levels of carbon monoxide (CO). Probably acts by protecting the N(2) fixation ability of the nitrogenase complex, which is inactivated in the presence of CO. The chain is N(2)-fixation sustaining protein CowN from Halorhodospira halophila (strain DSM 244 / SL1) (Ectothiorhodospira halophila (strain DSM 244 / SL1)).